The primary structure comprises 445 residues: Phosphoglucosamine mutase (445 aa).

The active-site Phosphoserine intermediate is the Ser99. Mg(2+)-binding residues include Ser99, Asp242, Asp244, and Asp246. At Ser99 the chain carries Phosphoserine.

Belongs to the phosphohexose mutase family. Requires Mg(2+) as cofactor. Post-translationally, activated by phosphorylation.

The catalysed reaction is alpha-D-glucosamine 1-phosphate = D-glucosamine 6-phosphate. Catalyzes the conversion of glucosamine-6-phosphate to glucosamine-1-phosphate. This is Phosphoglucosamine mutase from Campylobacter lari (strain RM2100 / D67 / ATCC BAA-1060).